We begin with the raw amino-acid sequence, 159 residues long: 3-hydroxyacyl-[acyl-carrier-protein] dehydratase FabZ (159 aa).

Residue histidine 58 is part of the active site.

The protein belongs to the thioester dehydratase family. FabZ subfamily.

The protein localises to the cytoplasm. It carries out the reaction a (3R)-hydroxyacyl-[ACP] = a (2E)-enoyl-[ACP] + H2O. In terms of biological role, involved in unsaturated fatty acids biosynthesis. Catalyzes the dehydration of short chain beta-hydroxyacyl-ACPs and long chain saturated and unsaturated beta-hydroxyacyl-ACPs. This Helicobacter pylori (strain Shi470) protein is 3-hydroxyacyl-[acyl-carrier-protein] dehydratase FabZ.